We begin with the raw amino-acid sequence, 224 residues long: UPF0758 protein mma_2551 (224 aa).

One can recognise an MPN domain in the interval 102–224 (SLNSPQAVKK…VYSFAEHGHL (123 aa)). The Zn(2+) site is built by His-173, His-175, and Asp-186. Positions 173 to 186 (HNHPSGSSEPSAAD) match the JAMM motif motif.

It belongs to the UPF0758 family.

This chain is UPF0758 protein mma_2551, found in Janthinobacterium sp. (strain Marseille) (Minibacterium massiliensis).